The primary structure comprises 1121 residues: CRISPR-associated endonuclease Cas9 1 (1121 aa).

Asp-9 functions as the For RuvC-like nuclease domain in the catalytic mechanism. Residues Asp-9, Glu-509, and Glu-513 each contribute to the Mg(2+) site. The HNH Cas9-type domain occupies 516-684 (EDDEKKAIQK…VRKKFIERNL (169 aa)). Catalysis depends on His-599, which acts as the Proton acceptor for HNH nuclease domain. His-738 contributes to the Mg(2+) binding site.

This sequence belongs to the CRISPR-associated protein Cas9 family. Subtype II-A subfamily. Monomer. Binds crRNA and tracrRNA. Mg(2+) serves as cofactor.

Functionally, CRISPR (clustered regularly interspaced short palindromic repeat) is an adaptive immune system that provides protection against mobile genetic elements (viruses, transposable elements and conjugative plasmids). CRISPR clusters contain spacers, sequences complementary to antecedent mobile elements, and target invading nucleic acids. CRISPR clusters are transcribed and processed into CRISPR RNA (crRNA). In type II CRISPR systems correct processing of pre-crRNA requires a trans-encoded small RNA (tracrRNA), endogenous ribonuclease 3 (rnc) and this protein. The tracrRNA serves as a guide for ribonuclease 3-aided processing of pre-crRNA. Subsequently Cas9/crRNA/tracrRNA endonucleolytically cleaves linear or circular dsDNA target complementary to the spacer; Cas9 is inactive in the absence of the 2 guide RNAs (gRNA). Cas9 recognizes the protospacer adjacent motif (PAM) in the CRISPR repeat sequences to help distinguish self versus nonself, as targets within the bacterial CRISPR locus do not have PAMs. PAM recognition is also required for catalytic activity. Cuts target DNA when Cas9 and gRNAs are mixed. The polypeptide is CRISPR-associated endonuclease Cas9 1 (Streptococcus thermophilus (strain ATCC BAA-491 / LMD-9)).